Consider the following 154-residue polypeptide: 3-dehydroquinate dehydratase (154 aa).

Residue Y23 is the Proton acceptor of the active site. 3 residues coordinate substrate: N74, H80, and D87. The active-site Proton donor is the H100. Residues 101 to 102 (LS) and R111 contribute to the substrate site.

It belongs to the type-II 3-dehydroquinase family. In terms of assembly, homododecamer.

The catalysed reaction is 3-dehydroquinate = 3-dehydroshikimate + H2O. It participates in metabolic intermediate biosynthesis; chorismate biosynthesis; chorismate from D-erythrose 4-phosphate and phosphoenolpyruvate: step 3/7. Functionally, catalyzes a trans-dehydration via an enolate intermediate. In Actinobacillus pleuropneumoniae serotype 5b (strain L20), this protein is 3-dehydroquinate dehydratase.